A 701-amino-acid polypeptide reads, in one-letter code: Protein mono-ADP-ribosyltransferase PARP12 (701 aa).

3 C3H1-type zinc fingers span residues 94–119 (LCRFMVYGACKFLRAGKNCRNSHSLT), 150–179 (WLLPEICQHYNKGDGPHGSCAFQKQCIKLH), and 180–202 (ICQYFLQGECKFGTSCKRSHDFS). The interval 234–268 (KNKSSAPSRVPPLFVPQGTSERKDSSGSVSPNTLS) is disordered. Position 258 is a phosphoserine (Ser-258). The segment covering 259–268 (SGSVSPNTLS) has biased composition (polar residues). C3H1-type zinc fingers lie at residues 270–297 (EEGDQICLYHIRKSCSFQDKCHRVHFHL) and 271–296 (EGDQICLYHIRKSCSFQDKCHRVHFH). WWE domains lie at 298 to 361 (PYRW…RLST) and 364 to 458 (SVTK…KVCR). Cys-474 carries the ADP-ribosylcysteine modification. One can recognise a PARP catalytic domain in the interval 484 to 698 (IPDYWDSSAL…ILLALGSLFS (215 aa)). Residues Asp-600 and Asp-611 each carry the ADP-ribosyl aspartic acid modification.

It belongs to the ARTD/PARP family. As to quaternary structure, interacts with PARP11; this interaction plays a key role in zika virus suppression. Interacts with ISG15. Post-translationally, auto-mono-ADP-ribosylated. Phosphorylated by PRKD1.

Its subcellular location is the nucleus. The protein localises to the golgi apparatus. It is found in the trans-Golgi network. The protein resides in the cytoplasm. It localises to the stress granule. The enzyme catalyses L-aspartyl-[protein] + NAD(+) = 4-O-(ADP-D-ribosyl)-L-aspartyl-[protein] + nicotinamide. The catalysed reaction is L-cysteinyl-[protein] + NAD(+) = S-(ADP-D-ribosyl)-L-cysteinyl-[protein] + nicotinamide + H(+). Mono-ADP-ribosyltransferase that mediates mono-ADP-ribosylation of target proteins. Acts as an antiviral factor by cooperating with PARP11 to suppress Zika virus replication. Displays anti-alphavirus activity during IFN-gamma immune activation by directly ADP-ribosylating the alphaviral non-structural proteins nsP3 and nsP4. Acts as a component of the PRKD1-driven regulatory cascade that selectively controls a major branch of the basolateral transport pathway by catalyzing the MARylation of GOLGA1. Acts also as a key regulator of mitochondrial function, protein translation, and inflammation. Inhibits PINK1/Parkin-dependent mitophagy and promotes cartilage degeneration by inhibiting the ubiquitination and SUMOylation of MFN1/2 by upregulating ISG15 and ISGylation. This Homo sapiens (Human) protein is Protein mono-ADP-ribosyltransferase PARP12.